The following is a 350-amino-acid chain: Zona pellucida-binding protein 1 (350 aa).

The N-terminal stretch at 1–44 is a signal peptide; the sequence is MEALAPGRAPRGRRRAGASGSVLSPLSLAAVLLCALLRAPPAVG. N-linked (GlcNAc...) asparagine glycans are attached at residues N113, N186, and N339.

Belongs to the zona pellucida-binding protein Sp38 family. N-glycosylated. In terms of tissue distribution, expressed in testis (at protein level). Expressed in male germ cells.

It is found in the cytoplasmic vesicle. Its subcellular location is the secretory vesicle. The protein localises to the acrosome. The protein resides in the acrosome membrane. It localises to the secreted. Functionally, plays a role in acrosome compaction and sperm morphogenesis. Is implicated in sperm-oocyte interaction during fertilization. The protein is Zona pellucida-binding protein 1 (Zpbp) of Mus musculus (Mouse).